A 97-amino-acid polypeptide reads, in one-letter code: Putative septation protein SpoVG (97 aa).

This sequence belongs to the SpoVG family.

Functionally, essential for sporulation. Interferes with or is a negative regulator of the pathway leading to asymmetric septation. In Bacillus licheniformis (strain ATCC 14580 / DSM 13 / JCM 2505 / CCUG 7422 / NBRC 12200 / NCIMB 9375 / NCTC 10341 / NRRL NRS-1264 / Gibson 46), this protein is Putative septation protein SpoVG.